Here is a 702-residue protein sequence, read N- to C-terminus: Polyribonucleotide nucleotidyltransferase (702 aa).

Residues Asp485 and Asp491 each coordinate Mg(2+). A KH domain is found at Pro552–Ile611. An S1 motif domain is found at Gly621–Lys689.

The protein belongs to the polyribonucleotide nucleotidyltransferase family. As to quaternary structure, component of the RNA degradosome, which is a multiprotein complex involved in RNA processing and mRNA degradation. Mg(2+) serves as cofactor.

The protein resides in the cytoplasm. It carries out the reaction RNA(n+1) + phosphate = RNA(n) + a ribonucleoside 5'-diphosphate. Its function is as follows. Involved in mRNA degradation. Catalyzes the phosphorolysis of single-stranded polyribonucleotides processively in the 3'- to 5'-direction. This chain is Polyribonucleotide nucleotidyltransferase, found in Shewanella woodyi (strain ATCC 51908 / MS32).